Reading from the N-terminus, the 466-residue chain is Integrator complex subunit 12 (466 aa).

The disordered stretch occupies residues 41–101; sequence KGNDSVYRPQ…EAEKRSADKM (61 aa). Over residues 69-84 the composition is skewed to low complexity; that stretch reads KASSSTPSSSMLSKPL. The span at 85 to 101 shows a compositional bias: basic and acidic residues; it reads TSEKLKKEAEKRSADKM. Residues 156 to 212 form a PHD-type zinc finger; that stretch reads GLACVVCRQMTVFSGNQLVECQECHNLYHQDCHKPQVTDKDVNDPRLVWYCARCTRQ. Disordered stretches follow at residues 216–251 and 311–466; these read MAQK…ELKA and GTSS…KLKK. Composition is skewed to polar residues over residues 218 to 233 and 311 to 329; these read QKNQ…SAVS and GTSS…SVQK. Over residues 338 to 373 the composition is skewed to low complexity; sequence PSKPGSVSKSGSGGSSSSSTIPIKPLPPLILGKTGL. Residues 374–386 are compositionally biased toward polar residues; the sequence is SRSMSSDNVSKTG. The span at 392 to 423 shows a compositional bias: low complexity; the sequence is PSSAGSVSSLSSQLGSNNGSSSAAGSNVTSSN. Over residues 453–466 the composition is skewed to basic residues; it reads QMVKKKAAQKKLKK.

This sequence belongs to the Integrator subunit 12 family. In terms of assembly, component of the Integrator complex, composed of core subunits INTS1, INTS2, INTS3, INTS4, INTS5, INTS6, INTS7, INTS8, INTS9/RC74, INTS10, INTS11/CPSF3L, INTS12, INTS13, INTS14 and INTS15. The core complex associates with protein phosphatase 2A subunits PPP2CA and PPP2R1A, to form the Integrator-PP2A (INTAC) complex.

It is found in the nucleus. Component of the integrator complex, a multiprotein complex that terminates RNA polymerase II (Pol II) transcription in the promoter-proximal region of genes. The integrator complex provides a quality checkpoint during transcription elongation by driving premature transcription termination of transcripts that are unfavorably configured for transcriptional elongation: the complex terminates transcription by (1) catalyzing dephosphorylation of the C-terminal domain (CTD) of Pol II subunit POLR2A/RPB1 and SUPT5H/SPT5, (2) degrading the exiting nascent RNA transcript via endonuclease activity and (3) promoting the release of Pol II from bound DNA. The integrator complex is also involved in terminating the synthesis of non-coding Pol II transcripts, such as enhancer RNAs (eRNAs), small nuclear RNAs (snRNAs), telomerase RNAs and long non-coding RNAs (lncRNAs). This is Integrator complex subunit 12 (ints12) from Xenopus tropicalis (Western clawed frog).